The following is a 387-amino-acid chain: Probable G-protein coupled receptor 173 (387 aa).

Residues 1–40 lie on the Extracellular side of the membrane; the sequence is MANGNASSDGPGNPLAAVVSTTGGVMGGAPSSAVSTYVKL. N5 carries N-linked (GlcNAc...) asparagine glycosylation. A helical membrane pass occupies residues 41–61; it reads VLLGLIICISLVGNLVVSLLV. At 62 to 87 the chain is on the cytoplasmic side; it reads LRDRALHKAPYYFLLDLCLADTIRSA. A helical transmembrane segment spans residues 88-108; sequence VCFPFVLVSIKNGSAWTYSVL. The Extracellular portion of the chain corresponds to 109–111; that stretch reads SCK. An intrachain disulfide couples C110 to C188. Residues 112 to 132 traverse the membrane as a helical segment; sequence VVAFMAVLFCFHAAFMLFCIS. Residues 133-153 are Cytoplasmic-facing; that stretch reads VTRYMAIAHHRFYSKRMTFWT. Residues 154–174 traverse the membrane as a helical segment; sequence CVAVVCMVWTLSVAMAFPPVF. Topologically, residues 175-202 are extracellular; it reads DVGTYKFIREEDQCIFEHRYFKANDTLG. N198 carries N-linked (GlcNAc...) asparagine glycosylation. Residues 203–223 form a helical membrane-spanning segment; that stretch reads FMLMLAVLILATHVVYMKLLL. The Cytoplasmic segment spans residues 224–301; that stretch reads FEYKHRKMKP…FKAEKQLGRM (78 aa). A helical transmembrane segment spans residues 302–322; the sequence is FYVITLFFLVLWSPYIVACYW. The Extracellular segment spans residues 323-335; sequence RVFVKACTIPHRY. The chain crosses the membrane as a helical span at residues 336-356; the sequence is LSTTVWMSFAQAGVNPIICFF. The Cytoplasmic segment spans residues 357-387; it reads LNKDLKKGLLAHLPPCCRTPPQLPREPYCVM.

Belongs to the G-protein coupled receptor 1 family.

The protein resides in the cell membrane. Its function is as follows. Is a receptor for the SMIM20 derived peptides Phoenixin-14 and Phoenixin-20. It mediates the Phoenixin-14 and Phoenixin-20 augmentation of gonadotropin-releasing hormone (GNRH) signaling in the hypothalamus and pituitary gland. In the ovary, it mediates the effects of Phoenixin-14 and Phoenixin-20 induced granulosa cell proliferation during follicular growth. The protein is Probable G-protein coupled receptor 173 (gpr173) of Danio rerio (Zebrafish).